A 318-amino-acid polypeptide reads, in one-letter code: MKPLNIIFAGTPDFAARHLQALLNSHHNVIGVYTQPDRPAGRGKKLTASPVKELAVANNIPVYQPGSLRKEPAQQELAALNADIMVVVAYGLILPKVVLDTPRLGCINVHGSILPRWRGAAPIQRALWAGDKETGVTVMQMDVGLDTGDMLLKTTLPIEDSDTSASLYEKLAEQGPVALLQALEGLANGTLAAEKQDEALANYAEKLSKEEARLDWNKSAQQLWQEVRAFNPWPVSYFEHQGNTIKVWQTQVSETTSTAAPGTIISASKKGIEVATADGVLTLLNMQLPGKKPLNVADILNARGEWFSPNTRLANEAQ.

Residue 112-115 (SILP) participates in (6S)-5,6,7,8-tetrahydrofolate binding.

The protein belongs to the Fmt family.

The catalysed reaction is L-methionyl-tRNA(fMet) + (6R)-10-formyltetrahydrofolate = N-formyl-L-methionyl-tRNA(fMet) + (6S)-5,6,7,8-tetrahydrofolate + H(+). Functionally, attaches a formyl group to the free amino group of methionyl-tRNA(fMet). The formyl group appears to play a dual role in the initiator identity of N-formylmethionyl-tRNA by promoting its recognition by IF2 and preventing the misappropriation of this tRNA by the elongation apparatus. The protein is Methionyl-tRNA formyltransferase of Shewanella baltica (strain OS155 / ATCC BAA-1091).